The following is a 321-amino-acid chain: D-alanine--D-alanine ligase (321 aa).

Residues 103-303 form the ATP-grasp domain; it reads KKILTPENIP…YVALCRMIVE (201 aa). 129–186 serves as a coordination point for ATP; it reads PLPRPYVLKPVNEGSSVGVAIIDESFNDGQPIRKDQIDPWKNFKTLLAEPFIKGRELT. Residues aspartate 254, glutamate 270, and asparagine 272 each contribute to the Mg(2+) site.

It belongs to the D-alanine--D-alanine ligase family. It depends on Mg(2+) as a cofactor. Mn(2+) is required as a cofactor.

It is found in the cytoplasm. The catalysed reaction is 2 D-alanine + ATP = D-alanyl-D-alanine + ADP + phosphate + H(+). Its pathway is cell wall biogenesis; peptidoglycan biosynthesis. Its function is as follows. Cell wall formation. This is D-alanine--D-alanine ligase from Zymomonas mobilis subsp. mobilis (strain ATCC 31821 / ZM4 / CP4).